The chain runs to 1169 residues: Phospholipid-transporting ATPase IF (1169 aa).

At 1–47 (LGFDPPHQSDTRTIYIANRFPQNGLYTPQKFIDNRIISSKYTVWNFV) the chain is on the cytoplasmic side. Residues 48–69 (PKNLFEQFRRVANFYFLIIFLV) form a helical membrane-spanning segment. The Extracellular portion of the chain corresponds to 70 to 74 (QLMID). Residues 75–96 (TPTSPITSGLPLFFVITVTAIK) traverse the membrane as a helical segment. The Cytoplasmic segment spans residues 97 to 281 (QGYEDWLRHN…SAVEKSMNTF (185 aa)). The chain crosses the membrane as a helical span at residues 282 to 303 (LIIYLIILISEAIISTILKYTW). At 304–333 (QAEEKWDEPWYNQKTEHQRNSSKILRFISD) the chain is on the extracellular side. The helical transmembrane segment at 334 to 351 (FLAFLVLYNFIIPISLYV) threads the bilayer. Topologically, residues 352 to 868 (TVEMQKFLGS…HGHFYYIRIA (517 aa)) are cytoplasmic. Asp399 functions as the 4-aspartylphosphate intermediate in the catalytic mechanism. 12 residues coordinate ATP: Asp399, Lys400, Thr401, Glu523, Phe564, Lys587, Arg618, Thr698, Gly699, Asp700, Arg786, and Lys792. Asp399 contributes to the Mg(2+) binding site. Residue Thr401 coordinates Mg(2+). The interval 794–802 (KVIRLIKIS) is required for binding to the RING-finger of HLTF. Asp813 contributes to the Mg(2+) binding site. Positions 816 and 817 each coordinate ATP. A Mg(2+)-binding site is contributed by Asp817. A helical transmembrane segment spans residues 869–890 (TLVQYFFYKNVCFITPQFLYQF). Over 891–902 (YCLFSQQTLYDS) the chain is Extracellular. The chain crosses the membrane as a helical span at residues 903–922 (VYLTLYNICFTSLPILIYSL). Topologically, residues 923 to 952 (LEQHIDPHILQNKPTLYRDISKNRLLSIKT) are cytoplasmic. A helical membrane pass occupies residues 953–974 (FLYWTILGFSRSFIFLFGSYFL). Residues 975–989 (IGKDASLLGNGQMFG) lie on the Extracellular side of the membrane. Residues 990–1012 (NWTFGTLVFTVMVITVTVKMALE) traverse the membrane as a helical segment. Residues 1013 to 1017 (THFWT) lie on the Cytoplasmic side of the membrane. The chain crosses the membrane as a helical span at residues 1018–1039 (WINHLVTWGSIIFYFVFSLFYG). Residues 1040–1057 (GILWPFLGSQNMYFVFIQ) lie on the Extracellular side of the membrane. Residues 1058–1082 (LVSSGSAWFAIILMVVTCLFLDVMK) traverse the membrane as a helical segment. Topologically, residues 1083–1169 (KVFDRQLHPT…TLSTMDSSTC (87 aa)) are cytoplasmic. Ser1146 is modified (phosphoserine).

Belongs to the cation transport ATPase (P-type) (TC 3.A.3) family. Type IV subfamily. As to quaternary structure, component of a P4-ATPase flippase complex which consists of a catalytic alpha subunit ATP11B and an accessory beta subunit TMEM30A. Interacts with HLTF (via the RING-finger). Mg(2+) is required as a cofactor. Ubiquitously expressed.

The protein resides in the recycling endosome membrane. It localises to the early endosome. It is found in the endoplasmic reticulum. Its subcellular location is the golgi apparatus. The protein localises to the trans-Golgi network. The protein resides in the nucleus inner membrane. It carries out the reaction ATP + H2O + phospholipidSide 1 = ADP + phosphate + phospholipidSide 2.. The enzyme catalyses a 1,2-diacyl-sn-glycero-3-phospho-L-serine(out) + ATP + H2O = a 1,2-diacyl-sn-glycero-3-phospho-L-serine(in) + ADP + phosphate + H(+). The catalysed reaction is a 1,2-diacyl-sn-glycero-3-phosphoethanolamine(out) + ATP + H2O = a 1,2-diacyl-sn-glycero-3-phosphoethanolamine(in) + ADP + phosphate + H(+). In terms of biological role, catalytic component of a P4-ATPase flippase complex which catalyzes the hydrolysis of ATP coupled to the transport of aminophospholipids, phosphatidylserines (PS) and phosphatidylethanolamines (PE), from the outer to the inner leaflet of intracellular membranes. May contribute to the maintenance of membrane lipid asymmetry in endosome compartment. Its function is as follows. Appears to play a role in the subnuclear trafficking of transcription factors with RING motifs. This chain is Phospholipid-transporting ATPase IF (ATP11B), found in Oryctolagus cuniculus (Rabbit).